We begin with the raw amino-acid sequence, 216 residues long: Tail fiber protein p36 (216 aa).

In terms of assembly, the distal half-fiber contains two molecules each of Gp36 and Gp37 and one molecule of Gp35.

Its subcellular location is the virion. Structural component of the distal-half tail fiber. This Enterobacteria phage Ox2 (Bacteriophage Ox2) protein is Tail fiber protein p36 (36).